We begin with the raw amino-acid sequence, 260 residues long: Imidazole glycerol phosphate synthase subunit HisF (260 aa).

Active-site residues include Asp-11 and Asp-130.

The protein belongs to the HisA/HisF family. As to quaternary structure, heterodimer of HisH and HisF.

It is found in the cytoplasm. It catalyses the reaction 5-[(5-phospho-1-deoxy-D-ribulos-1-ylimino)methylamino]-1-(5-phospho-beta-D-ribosyl)imidazole-4-carboxamide + L-glutamine = D-erythro-1-(imidazol-4-yl)glycerol 3-phosphate + 5-amino-1-(5-phospho-beta-D-ribosyl)imidazole-4-carboxamide + L-glutamate + H(+). It participates in amino-acid biosynthesis; L-histidine biosynthesis; L-histidine from 5-phospho-alpha-D-ribose 1-diphosphate: step 5/9. In terms of biological role, IGPS catalyzes the conversion of PRFAR and glutamine to IGP, AICAR and glutamate. The HisF subunit catalyzes the cyclization activity that produces IGP and AICAR from PRFAR using the ammonia provided by the HisH subunit. In Thermomicrobium roseum (strain ATCC 27502 / DSM 5159 / P-2), this protein is Imidazole glycerol phosphate synthase subunit HisF.